The primary structure comprises 406 residues: Eukaryotic initiation factor 4A-I (406 aa).

The tract at residues 1 to 21 (MSASQDSRSRDNGPDGMEPEG) is disordered. Position 2 is an N-acetylserine (serine 2). Serine 4 carries the phosphoserine modification. Residues 32-60 (DSFDDMNLSESLLRGIYAYGFEKPSAIQQ) carry the Q motif motif. One can recognise a Helicase ATP-binding domain in the interval 63–234 (ILPCIKGYDV…KKFMRDPIRI (172 aa)). 76–83 (AQSGTGKT) is an ATP binding site. Residue lysine 118 is modified to N6-acetyllysine. A Glycyl lysine isopeptide (Lys-Gly) (interchain with G-Cter in SUMO2) cross-link involves residue lysine 146. A Phosphothreonine modification is found at threonine 158. At lysine 174 the chain carries N6-acetyllysine. Residues 182–185 (DEAD) carry the DEAD box motif. Position 193 is an N6-acetyllysine (lysine 193). Lysine 225 is covalently cross-linked (Glycyl lysine isopeptide (Lys-Gly) (interchain with G-Cter in SUMO2)). An N6-acetyllysine; alternate modification is found at lysine 238. Residue lysine 238 forms a Glycyl lysine isopeptide (Lys-Gly) (interchain with G-Cter in SUMO2); alternate linkage. Residues 245 to 406 (GIRQFYINVE…EMPLNVADLI (162 aa)) enclose the Helicase C-terminal domain. Residues lysine 309, lysine 369, and lysine 381 each participate in a glycyl lysine isopeptide (Lys-Gly) (interchain with G-Cter in SUMO2) cross-link.

Belongs to the DEAD box helicase family. eIF4A subfamily. In terms of assembly, eIF4F is a multi-subunit complex, the composition of which varies with external and internal environmental conditions. It is composed of at least EIF4A, EIF4E and EIF4G1/EIF4G3. Interacts with PAIP1, EIF4E and UPF2. Found in a complex with XPO7, EIF4A1, ARHGAP1, VPS26A, VPS29, VPS35 and SFN. May interact with NOM1. Interacts with PDCD4; this interferes with the interaction between EIF4A and EIF4G. Interacts with RBM4. Interacts with DDX3X in an RNA-independent manner. Interacts with PKP1 (via N-terminus); the interaction promotes EIF4A1 recruitment to the cap-dependent translation complex and EIF4A1 ATPase activity.

The protein localises to the cytoplasm. It localises to the perinuclear region. Its subcellular location is the cell membrane. It is found in the stress granule. It carries out the reaction ATP + H2O = ADP + phosphate + H(+). ATP-dependent RNA helicase which is a subunit of the eIF4F complex involved in cap recognition and is required for mRNA binding to ribosome. In the current model of translation initiation, eIF4A unwinds RNA secondary structures in the 5'-UTR of mRNAs which is necessary to allow efficient binding of the small ribosomal subunit, and subsequent scanning for the initiator codon. As a result, promotes cell proliferation and growth. In Macaca fascicularis (Crab-eating macaque), this protein is Eukaryotic initiation factor 4A-I (EIF4A1).